The primary structure comprises 96 residues: Cytoplasmic envelopment protein 3 (96 aa).

Gly2 is lipidated: N-myristoyl glycine; by host. Positions 18-19 (LI) match the Di-leucine-like internalization motif motif. The segment at 37-43 (DIESEEE) is asp/Glu-rich (acidic). Phosphoserine is present on Ser40. Positions 57–96 (RAPGRQRLRSSDPPSRHTHRRTPGGACPATQFPPPMSDSE) are disordered. A compositionally biased stretch (pro residues) spans 87–96 (QFPPPMSDSE).

This sequence belongs to the herpesviridae cytoplasmic envelopment protein 3 family. Interacts with cytoplasmic envelopment protein 2; this interaction is essential for the proper localization of each protein to the assembly complex and thus for the production of infectious virus. Interacts with gE (via C-terminus). Interacts with gD (via C-terminus). Interacts with UL56. In terms of processing, myristoylation and palmitoylation (probably on one or more of the nearby cysteines at the N-terminus) enable membrane-binding and Golgi apparatus-specific targeting and are essential for efficient packaging. Post-translationally, phosphorylated. Phosphorylation does not seem to be required for recycling to the host Golgi apparatus. Packaging is selective for underphosphorylated forms.

It localises to the virion tegument. The protein resides in the virion membrane. Its subcellular location is the host cell membrane. It is found in the host Golgi apparatus membrane. Plays an important role in the cytoplasmic envelopment of tegument proteins and capsids during the assembly and egress processes. Also participates in viral entry at the fusion step probably by regulating the core fusion machinery. The chain is Cytoplasmic envelopment protein 3 from Human herpesvirus 1 (strain KOS) (HHV-1).